Reading from the N-terminus, the 485-residue chain is Glutamate--tRNA ligase (485 aa).

R6 contacts L-glutamate. The 'HIGH' region signature appears at 9–19 (PSPTGNLHIGT). Residues Y192 and 210 to 214 (RGEDH) each bind L-glutamate. The 'KMSKS' region motif lies at 248–252 (KLSKR). K251 lines the ATP pocket.

It belongs to the class-I aminoacyl-tRNA synthetase family. Glutamate--tRNA ligase type 1 subfamily. In terms of assembly, monomer. The cofactor is Does not require zinc..

It localises to the cytoplasm. It catalyses the reaction tRNA(Glu) + L-glutamate + ATP = L-glutamyl-tRNA(Glu) + AMP + diphosphate. Its function is as follows. Non-discriminating glutamyl-tRNA synthetase. Catalyzes the attachment of glutamate to tRNA(Glu) in a two-step reaction: glutamate is first activated by ATP to form Glu-AMP and then transferred to the acceptor end of tRNA(Glu). Acylates both tRNA(Glu) and tRNA(Gln) with glutamate, but has 13-fold higher efficiency with tRNA(Glu). This is Glutamate--tRNA ligase (gltX) from Thermosynechococcus vestitus (strain NIES-2133 / IAM M-273 / BP-1).